Consider the following 324-residue polypeptide: Beta-ketoacyl-[acyl-carrier-protein] synthase III (324 aa).

Residues Cys114 and His251 contribute to the active site. The ACP-binding stretch occupies residues 252–256 (QANKR). Residue Asn281 is part of the active site.

The protein belongs to the thiolase-like superfamily. FabH family. As to quaternary structure, homodimer.

Its subcellular location is the cytoplasm. The enzyme catalyses malonyl-[ACP] + acetyl-CoA + H(+) = 3-oxobutanoyl-[ACP] + CO2 + CoA. The protein operates within lipid metabolism; fatty acid biosynthesis. Its function is as follows. Catalyzes the condensation reaction of fatty acid synthesis by the addition to an acyl acceptor of two carbons from malonyl-ACP. Catalyzes the first condensation reaction which initiates fatty acid synthesis and may therefore play a role in governing the total rate of fatty acid production. Possesses both acetoacetyl-ACP synthase and acetyl transacylase activities. Its substrate specificity determines the biosynthesis of branched-chain and/or straight-chain of fatty acids. In Bradyrhizobium sp. (strain BTAi1 / ATCC BAA-1182), this protein is Beta-ketoacyl-[acyl-carrier-protein] synthase III.